Consider the following 161-residue polypeptide: MYRIGNGIDFHRLEINPNRPLVLGGVECESEVALVGHSDADIILHAISDAILGALALGDIGQYFPDTDPKLKNIDSKIILAKCLELMKERNFQLVNVDCTVIGEKPKIAPLKEKIKKSLCSLLDLPVDCVSVKATTTEKMGALGRQEGIGTFCTILLVKNL.

A divalent metal cation-binding residues include Asp-9 and His-11. 4-CDP-2-C-methyl-D-erythritol 2-phosphate contacts are provided by residues Asp-9–His-11 and His-37–Ser-38. His-45 is a binding site for a divalent metal cation. 4-CDP-2-C-methyl-D-erythritol 2-phosphate contacts are provided by residues Asp-59–Gly-61, Phe-64–Asp-68, Thr-135–Glu-138, and Arg-145.

The protein belongs to the IspF family. As to quaternary structure, homotrimer. Requires a divalent metal cation as cofactor.

It carries out the reaction 4-CDP-2-C-methyl-D-erythritol 2-phosphate = 2-C-methyl-D-erythritol 2,4-cyclic diphosphate + CMP. It participates in isoprenoid biosynthesis; isopentenyl diphosphate biosynthesis via DXP pathway; isopentenyl diphosphate from 1-deoxy-D-xylulose 5-phosphate: step 4/6. Its function is as follows. Involved in the biosynthesis of isopentenyl diphosphate (IPP) and dimethylallyl diphosphate (DMAPP), two major building blocks of isoprenoid compounds. Catalyzes the conversion of 4-diphosphocytidyl-2-C-methyl-D-erythritol 2-phosphate (CDP-ME2P) to 2-C-methyl-D-erythritol 2,4-cyclodiphosphate (ME-CPP) with a corresponding release of cytidine 5-monophosphate (CMP). The protein is 2-C-methyl-D-erythritol 2,4-cyclodiphosphate synthase of Leptospira borgpetersenii serovar Hardjo-bovis (strain JB197).